Consider the following 531-residue polypeptide: UPF0159 protein CPn_0746/CP_1126/CPj0746/CpB0774 (531 aa).

ThyX domains follow at residues 38-274 (KGAL…AEPH) and 309-511 (PSVQ…FKFV).

The protein belongs to the UPF0159 family.

The chain is UPF0159 protein CPn_0746/CP_1126/CPj0746/CpB0774 from Chlamydia pneumoniae (Chlamydophila pneumoniae).